The chain runs to 60 residues: AVKTITLNLVSPSANRYATFLTEIRDNVRXRSLDYSHSGIDVIGAPSSRDSXLNINFQSP.

This sequence belongs to the ribosome-inactivating protein family. Type 1 RIP subfamily.

It catalyses the reaction Endohydrolysis of the N-glycosidic bond at one specific adenosine on the 28S rRNA.. Its function is as follows. Single-chain ribosome-inactivating protein. This is Ribosome-inactivating protein dianthin-32 from Dianthus caryophyllus (Carnation).